The primary structure comprises 693 residues: Exocyst complex component 7 (693 aa).

Ser-236 bears the Phosphoserine mark. Residues 236–259 (SWGHEALRPRHSGRQTEPKKTTSA) form a disordered region.

The protein belongs to the EXO70 family. The exocyst complex is composed of Sec3/Exoc1, Sec5/Exoc2, Sec6/Exoc3, Sec8/Exoc4, Sec10/Exoc5, Sec15/Exoc6, Exo70/Exoc7 and Exo84/Exoc8.

Its function is as follows. Required for exocytosis. Thought to function in intracellular vesicle targeting and docking before SNARE complex formation. This Drosophila melanogaster (Fruit fly) protein is Exocyst complex component 7.